A 263-amino-acid chain; its full sequence is Glutamate racemase (263 aa).

Residues 13–14 and 45–46 each bind substrate; these read DS and YG. Cys77 acts as the Proton donor/acceptor in catalysis. 78 to 79 provides a ligand contact to substrate; that stretch reads NT. Cys185 acts as the Proton donor/acceptor in catalysis. Position 186 to 187 (186 to 187) interacts with substrate; it reads TH.

Belongs to the aspartate/glutamate racemases family.

The catalysed reaction is L-glutamate = D-glutamate. The protein operates within cell wall biogenesis; peptidoglycan biosynthesis. Provides the (R)-glutamate required for cell wall biosynthesis. The sequence is that of Glutamate racemase from Vibrio vulnificus (strain CMCP6).